The sequence spans 167 residues: cAMP-dependent protein kinase type I-alpha regulatory subunit (167 aa).

Residue T12 is modified to Phosphothreonine. S14 and S20 each carry phosphoserine. Positions 30-33 (RGAI) match the Pseudophosphorylation motif motif. At S34 the chain carries Phosphoserine. 3',5'-cyclic AMP is bound by residues 51–78 (LFSHLDDNERILMGSTLRMYEEFLSKVS), 79–167 (ILES…ILKR), E147, and R156. S82 carries the post-translational modification Phosphoserine.

Belongs to the cAMP-dependent kinase regulatory chain family. As to quaternary structure, the inactive holoenzyme is composed of two regulatory chains and two catalytic chains. Activation by cAMP releases the two active catalytic monomers and the regulatory dimer. Interacts with PRKACA and PRKACB. PRKAR1A also interacts with RFC2; the complex may be involved in cell survival. Interacts with AKAP4. Interacts with RARA; the interaction occurs in the presence of cAMP or FSH and regulates RARA transcriptional activity. Interacts with the phosphorylated form of PJA2. Interacts with CBFA2T3. Interacts with PRKX; regulates this cAMP-dependent protein kinase. Interacts with smAKAP; this interaction may target PRKAR1A to the plasma membrane. Interacts with AICDA. Post-translationally, the pseudophosphorylation site binds to the substrate-binding region of the catalytic chain, resulting in the inhibition of its activity.

It localises to the cell membrane. Its function is as follows. Regulatory subunit of the cAMP-dependent protein kinases involved in cAMP signaling in cells. The chain is cAMP-dependent protein kinase type I-alpha regulatory subunit from Mesocricetus auratus (Golden hamster).